Consider the following 305-residue polypeptide: UDP-3-O-acyl-N-acetylglucosamine deacetylase (305 aa).

Residues His-77, His-234, and Asp-238 each coordinate Zn(2+). His-261 acts as the Proton donor in catalysis.

This sequence belongs to the LpxC family. It depends on Zn(2+) as a cofactor.

The catalysed reaction is a UDP-3-O-[(3R)-3-hydroxyacyl]-N-acetyl-alpha-D-glucosamine + H2O = a UDP-3-O-[(3R)-3-hydroxyacyl]-alpha-D-glucosamine + acetate. Its pathway is glycolipid biosynthesis; lipid IV(A) biosynthesis; lipid IV(A) from (3R)-3-hydroxytetradecanoyl-[acyl-carrier-protein] and UDP-N-acetyl-alpha-D-glucosamine: step 2/6. Its function is as follows. Catalyzes the hydrolysis of UDP-3-O-myristoyl-N-acetylglucosamine to form UDP-3-O-myristoylglucosamine and acetate, the committed step in lipid A biosynthesis. The chain is UDP-3-O-acyl-N-acetylglucosamine deacetylase from Oleidesulfovibrio alaskensis (strain ATCC BAA-1058 / DSM 17464 / G20) (Desulfovibrio alaskensis).